The following is a 618-amino-acid chain: Mitochondrial Rho GTPase 2 (618 aa).

Residues 1-591 (MKRDVRILLL…LNAVELGAAS (591 aa)) are Cytoplasmic-facing. The 167-residue stretch at 2-168 (KRDVRILLLG…FYYAQKAVLH (167 aa)) folds into the Miro 1 domain. GTP contacts are provided by glycine 16, lysine 17, threonine 18, and serine 19. Threonine 18 is a Mg(2+) binding site. Residues proline 35 and aspartate 57 each contribute to the Mg(2+) site. Serine 59, asparagine 118, lysine 119, aspartate 121, alanine 149, and lysine 150 together coordinate GTP. EF-hand domains are found at residues 184–219 (ACSR…CFGN) and 304–339 (LGYQ…FPCM). Aspartate 197, aspartate 199, asparagine 201, glutamate 208, aspartate 317, aspartate 319, aspartate 321, and glutamate 328 together coordinate Ca(2+). In terms of domain architecture, Miro 2 spans 416–579 (RNVFLCKVLG…YTKLATAATF (164 aa)). Glycine 428, glycine 430, lysine 431, serine 432, and alanine 433 together coordinate GTP. A Mg(2+)-binding site is contributed by serine 432. Glutamate 474 lines the Mg(2+) pocket. 3 residues coordinate GTP: lysine 528, aspartate 530, and cysteine 559. Residues 592-614 (FWLRVALGAAVTALVGFTLYRVL) form a helical; Anchor for type IV membrane protein membrane-spanning segment. Over 615-618 (AKNK) the chain is Mitochondrial intermembrane.

The protein belongs to the mitochondrial Rho GTPase family. In terms of assembly, homodimer.

It localises to the mitochondrion outer membrane. The enzyme catalyses GTP + H2O = GDP + phosphate + H(+). It carries out the reaction ATP + H2O = ADP + phosphate + H(+). It catalyses the reaction UTP + H2O = UDP + phosphate + H(+). Functionally, atypical mitochondrial nucleoside-triphosphatase (NTPase) involved in mitochondrial trafficking. Probably involved in control of anterograde transport of mitochondria and their subcellular distribution. Can hydrolyze GTP, ATP and UTP. This Gallus gallus (Chicken) protein is Mitochondrial Rho GTPase 2 (RHOT2).